A 244-amino-acid chain; its full sequence is 5'-nucleotidase SurE (244 aa).

Residues Asp8, Asp9, Ser39, and Asn96 each coordinate a divalent metal cation.

The protein belongs to the SurE nucleotidase family. A divalent metal cation serves as cofactor.

It localises to the cytoplasm. It carries out the reaction a ribonucleoside 5'-phosphate + H2O = a ribonucleoside + phosphate. Nucleotidase that shows phosphatase activity on nucleoside 5'-monophosphates. In Thermus thermophilus (strain ATCC 27634 / DSM 579 / HB8), this protein is 5'-nucleotidase SurE.